The sequence spans 455 residues: Bifunctional protein GlmU (455 aa).

The tract at residues 1-226 is pyrophosphorylase; it reads MSLEIVILAA…PMEVQGANDR (226 aa). UDP-N-acetyl-alpha-D-glucosamine-binding positions include 8–11, Lys-22, Gln-73, 78–79, 99–101, Gly-136, Glu-151, Asn-166, and Asn-224; these read LAAG, GT, and YGD. Mg(2+) is bound at residue Asp-101. Asn-224 contacts Mg(2+). The segment at 227 to 247 is linker; it reads KQLSELERHYQLRAGRRLMAQ. Residues 248-455 are N-acetyltransferase; it reads GVTLRDPARF…WKRPEKIKKN (208 aa). Residues Arg-330 and Lys-348 each coordinate UDP-N-acetyl-alpha-D-glucosamine. The Proton acceptor role is filled by His-360. 2 residues coordinate UDP-N-acetyl-alpha-D-glucosamine: Tyr-363 and Asn-374. Acetyl-CoA contacts are provided by residues Ala-377, 383 to 384, Ser-402, Ala-420, and Arg-437; that span reads NY.

The protein in the N-terminal section; belongs to the N-acetylglucosamine-1-phosphate uridyltransferase family. In the C-terminal section; belongs to the transferase hexapeptide repeat family. As to quaternary structure, homotrimer. Mg(2+) is required as a cofactor.

It is found in the cytoplasm. The catalysed reaction is alpha-D-glucosamine 1-phosphate + acetyl-CoA = N-acetyl-alpha-D-glucosamine 1-phosphate + CoA + H(+). The enzyme catalyses N-acetyl-alpha-D-glucosamine 1-phosphate + UTP + H(+) = UDP-N-acetyl-alpha-D-glucosamine + diphosphate. The protein operates within nucleotide-sugar biosynthesis; UDP-N-acetyl-alpha-D-glucosamine biosynthesis; N-acetyl-alpha-D-glucosamine 1-phosphate from alpha-D-glucosamine 6-phosphate (route II): step 2/2. Its pathway is nucleotide-sugar biosynthesis; UDP-N-acetyl-alpha-D-glucosamine biosynthesis; UDP-N-acetyl-alpha-D-glucosamine from N-acetyl-alpha-D-glucosamine 1-phosphate: step 1/1. It participates in bacterial outer membrane biogenesis; LPS lipid A biosynthesis. Catalyzes the last two sequential reactions in the de novo biosynthetic pathway for UDP-N-acetylglucosamine (UDP-GlcNAc). The C-terminal domain catalyzes the transfer of acetyl group from acetyl coenzyme A to glucosamine-1-phosphate (GlcN-1-P) to produce N-acetylglucosamine-1-phosphate (GlcNAc-1-P), which is converted into UDP-GlcNAc by the transfer of uridine 5-monophosphate (from uridine 5-triphosphate), a reaction catalyzed by the N-terminal domain. This chain is Bifunctional protein GlmU, found in Pseudomonas fluorescens (strain Pf0-1).